Consider the following 361-residue polypeptide: Peptide chain release factor 1 (361 aa).

Glutamine 237 bears the N5-methylglutamine mark. The span at 285–296 (DEKRRSAEESTR) shows a compositional bias: basic and acidic residues. The disordered stretch occupies residues 285–305 (DEKRRSAEESTRRNLVSSGDR).

The protein belongs to the prokaryotic/mitochondrial release factor family. Post-translationally, methylated by PrmC. Methylation increases the termination efficiency of RF1.

The protein resides in the cytoplasm. In terms of biological role, peptide chain release factor 1 directs the termination of translation in response to the peptide chain termination codons UAG and UAA. This chain is Peptide chain release factor 1, found in Shewanella halifaxensis (strain HAW-EB4).